A 312-amino-acid polypeptide reads, in one-letter code: Taste receptor type 2 member 7 (312 aa).

Residues 1–9 (MTYETDTTL) are Extracellular-facing. The helical transmembrane segment at 10-30 (MFVAVCEALVGILGNAFIALV) threads the bilayer. The Cytoplasmic portion of the chain corresponds to 31-49 (NFMGWMKNRKITAIDLILS). The helical transmembrane segment at 50–70 (SLAMSRICLQCIILLDCIILV) threads the bilayer. At 71–101 (QYPDTYNRGKEMRIIDFFWTLTNHLSVWFAT) the chain is on the extracellular side. The helical transmembrane segment at 102-122 (CLSIFYFFKIANFFHPLFLWI) threads the bilayer. Residues 123-128 (KWRIDK) are Cytoplasmic-facing. Residues 129 to 149 (LILRTLLACLILSLCFSLPVT) form a helical membrane-spanning segment. The Extracellular segment spans residues 150–187 (ENLTDDFRRCVKTKERINSTLRCKLNKAGYASVKVNLN). N-linked (GlcNAc...) asparagine glycosylation is found at asparagine 151 and asparagine 167. The chain crosses the membrane as a helical span at residues 188 to 208 (LVMLFPFSVSLVSFLLLILSL). Over 209-235 (WRHTRQMQLNVTGYNDPSTTAHVKATK) the chain is Cytoplasmic. The chain crosses the membrane as a helical span at residues 236 to 256 (AVISFLVLFIVYCLAFLIATS). Topologically, residues 257-266 (SYFMPESELA) are extracellular. Residues 267–287 (VIWGELIALIYPSSHSFILIL) form a helical membrane-spanning segment. Residues 288 to 312 (GNSKLKQASVRVLCRVKTMLKGRKY) lie on the Cytoplasmic side of the membrane.

This sequence belongs to the G-protein coupled receptor T2R family. In terms of tissue distribution, expressed in subsets of taste receptor cells of the tongue and palate epithelium and exclusively in gustducin-positive cells. Expressed in 15% taste bud cells in circumvallate and foliate papillae but only in 2% in fungiform papillae. Expressed in the duodenum, antrum and fundus (part of the stomach) and in gastric endocrine cells.

Its subcellular location is the membrane. Its function is as follows. Gustducin-coupled receptor implicated in the perception of bitter compounds in the oral cavity and the gastrointestinal tract. Signals through PLCB2 and the calcium-regulated cation channel TRPM5. This Rattus norvegicus (Rat) protein is Taste receptor type 2 member 7 (Tas2r7).